A 134-amino-acid chain; its full sequence is Holo-[acyl-carrier-protein] synthase (134 aa).

Mg(2+)-binding residues include Asp-8 and Glu-57.

This sequence belongs to the P-Pant transferase superfamily. AcpS family. Mg(2+) serves as cofactor.

It localises to the cytoplasm. The enzyme catalyses apo-[ACP] + CoA = holo-[ACP] + adenosine 3',5'-bisphosphate + H(+). Its function is as follows. Transfers the 4'-phosphopantetheine moiety from coenzyme A to a Ser of acyl-carrier-protein. This Roseobacter denitrificans (strain ATCC 33942 / OCh 114) (Erythrobacter sp. (strain OCh 114)) protein is Holo-[acyl-carrier-protein] synthase.